A 728-amino-acid polypeptide reads, in one-letter code: MLPALLPLLLPALLPGAGGGRCPQRCACTQPALRCPTPPPGARPAPARASFTHLPVKVIPSHAFEGLRDAFIIEISQSDSLERIEASAFDSLPALSEILILNTKNLLHIEDGAFRNLPRLKYLSICNTGIIEFPDLTQIFSSEAHFILELCDNLRMTTIPQNAFQGMSNESLTLKLYKNGFEDIHSHAFNGTKLNQLILKDNKNLRRIHNDALRGATGPDVLDISSTALESLPSYGLEAIQVLNAMSSYSLKRLPPLDKFSSLLEAVLTYPSHCCAFQNLRTEKQNSLLSIFDNFSKQCESTMRKPASEVFYRDASSNTSLWPAEKHMYPLETGEEAFPYSYSTVFYEDEMTGFDFEYDFCQPKILTCTPEPDAFNPCEDILGYSFLRVLIWFINILALAGNFIVLLVLITSHYKLTVPRFLMCNLSFADFCMGLYLLLIASVDAQTSGQYYNHAIDWQTGSGCSTAGFFTVFASELSVYTLTVITIERWHTITYAMQLDRKLRLRHAVPIMLGGWVFSILIAVLPLLGVSSYMKVSICLPMDIETGLSQAYILLILMLNVIAFLVICACYIKIYVAVQNPELVAANKDTKIAKRMAILIFTDFTCMAPISFFAISAAIKVPLITVTNSKILLVLFYPVNSCANPFLYAIFTKAFQRDFFLLMSKLGCCKSRAELYRVNYFSAYTPNCKNGSSAPGPSKASQALLLLSASEKLCKTRRSTKKSQPECQ.

A signal peptide spans 1–19 (MLPALLPLLLPALLPGAGG). Over 20-389 (GRCPQRCACT…DILGYSFLRV (370 aa)) the chain is Extracellular. LRR repeat units lie at residues 92–116 (LPALSEILILNTKNLLHIEDGAFRN), 117–142 (LPRLKYLSICNTGIIEFPDLTQIFSS), 144–166 (AHFILELCDNLRMTTIPQNAFQG), 168–191 (SNESLTLKLYKNGFEDIHSHAFNG), 193–215 (KLNQLILKDNKNLRRIHNDALRG), and 216–239 (ATGPDVLDISSTALESLPSYGLEA). Residues 390-410 (LIWFINILALAGNFIVLLVLI) form a helical membrane-spanning segment. Over 411 to 420 (TSHYKLTVPR) the chain is Cytoplasmic. The helical transmembrane segment at 421–441 (FLMCNLSFADFCMGLYLLLIA) threads the bilayer. At 442–466 (SVDAQTSGQYYNHAIDWQTGSGCST) the chain is on the extracellular side. The cysteines at positions 464 and 539 are disulfide-linked. The helical transmembrane segment at 467 to 487 (AGFFTVFASELSVYTLTVITI) threads the bilayer. Topologically, residues 488–507 (ERWHTITYAMQLDRKLRLRH) are cytoplasmic. A helical membrane pass occupies residues 508–528 (AVPIMLGGWVFSILIAVLPLL). Topologically, residues 529 to 551 (GVSSYMKVSICLPMDIETGLSQA) are extracellular. A helical membrane pass occupies residues 552–572 (YILLILMLNVIAFLVICACYI). At 573 to 595 (KIYVAVQNPELVAANKDTKIAKR) the chain is on the cytoplasmic side. Residues 596–616 (MAILIFTDFTCMAPISFFAIS) form a helical membrane-spanning segment. Residues 617–630 (AAIKVPLITVTNSK) lie on the Extracellular side of the membrane. The chain crosses the membrane as a helical span at residues 631–651 (ILLVLFYPVNSCANPFLYAIF). Topologically, residues 652 to 728 (TKAFQRDFFL…STKKSQPECQ (77 aa)) are cytoplasmic.

This sequence belongs to the G-protein coupled receptor 1 family. FSH/LSH/TSH subfamily. As to expression, expressed in ovarian follicle granulosa cells. Expressed in ovarian follicle theca cells.

It localises to the cell membrane. Functionally, receptor for lutropin-choriogonadotropic hormone. The activity of this receptor is mediated by G proteins which activate adenylate cyclase. The protein is Lutropin-choriogonadotropic hormone receptor of Gallus gallus (Chicken).